Here is a 1704-residue protein sequence, read N- to C-terminus: MSTNNIIEGDEDTKTTITNESNTDNNNNNNDDNKNNTENTTSPTNNNNTNDNDNNSDNNNNKNNNNNNSQVTEEQQVTLEDSGSEDDINFEEHELSDSAEEDEDEMEDDDEDADGRQNQNPNSAGGKRRGRPSKVQQSTNTHLSQTTPESPTIFTPDGKVPKRISTSTNNTPNTQSALKTNKRPRLTSDEEKDLMLSEESDGGVGEDDDSIMSTNDKPQDENQSNQNQNNNNNNNNNTTTTTTTTNNSNNNNQNLNQNNNNNNNNNNINNNNNNNNSNNDNNNNNNRPARGRPKTNGSRSEERKRIQLQQYIQATQGSSTTTSDPNNQNNQINQINQNNQNNQNNQNNQNNSLGEEEFGEEFEEEEEDMGQPKKKTKYKTSKKSVPNHLDIRPCWFVGCVKADRSLKILRPCLIPTCKTHAIKSEVRISEALRRGDFVNDESSGVKDKVCGICGDKKDLHHCGNNGCAFGFCNDCVEIAAMKHNNHPNGNKWICWVCQFVRTKAKEKERTRWVKEQLNPGLTSISRKFRRGPELDMAQAQFLQQQQQQQTSPNEKRSSQFNSNNSNNNNNNNSNNNNNNSGFDPSGSPNNQQNQKRLRKKINASSDIYETRKYTKKRNDEDSAPPSPTSIIGNSVMVGSSGAAGGGIIKNTTVVVEQQGYSATPPSPNTLMVQQQQQLQQTHQQARLSQQQAQLQQLKALQQQHQHQQQNNGNFNNLIESVLSPNREPLNPIDNFVDQTFTAVKFFSTLSQNPPDEIKERIDNFVDLMMRIKTVRWASDYGLVWRMIEELSNLIKRNLLSSQSVVEMYSELKSLEEGALENMTTNARNVPLERAITMVFENHETAGLIGKECCSTRNALIYSIEVALRAIADYQHDLEDNLMEESLRSNKVSTEIEQIEHQIKANLDEIHKFKYQEVELLDSLSKVRGAIAAHESIRDTLQKKSSELKVDMLLIKNGISDKEKETKSQQATLENEIYALKLLITMVESIYWIHDYFYESRVGECEKLINNKLSQLQNKLETQIPHPPNALDNAIPNTTTTVMGEDGQPVIVPTTVDIKNKFKTIAIYHKICMQHKVPNFHLEKPDRIQVAVSCINEFASNPLVDIFDNPPEVDMRYVMAVHDANYIKKLETSLPPENSEFETHLESDKSGAMVTVASHKDFEGDDDNIYDTFVSHRSIKAALRASGSVCAAVDSVSRSGYTRAFCAIRPPGHHAGRYGRTSDAPSQGYCLINNVAIGAKYASLTAGYSRIAVVDFDVHHGNGTQEILSGDDNFLFISIHVCDEKRYFYPGTGQDVGDIDEVSGQFDGNILNIGLKRNTGSAVFLQQWMNKIIPRLEAYKPQLIFLSAGFDGHKDDPTNGLKLNEEDYFVITKMIKTVAFKYCKGRIISVLEGGYGIEKTNSLQRCVNSHLKALIEDTDEEIHLANISYGHFSETQETAIPKFNINNFISNPNKRGKKNNLNTINFINNNMNNINNNITNSLSNKQLERQKQLQQQQQQAQQAQQQQSPQQSQTIENTSITTTTTTTSTTTTLSTSDSESNNNINNNNNDYNNNNNNNSNNNNNNSNNNQPTNFNSSTSSPILSGNNNNNNNNNNNNNNNNINNNNNNNSNNNNNMNTSNPTNQQSSVIISDDMDDVQTNSNPPNPQYPLSPNSVNRGNNPSNISMSGAQRSAPLIISPKPSNSPNSPSTSNNNGTPQNINNSDN.

Disordered stretches follow at residues 1–303 (MSTN…SEER), 315–383 (TQGS…TSKK), and 540–634 (QFLQ…IGNS). A compositionally biased stretch (low complexity) spans 15 to 69 (TTITNESNTDNNNNNNDDNKNNTENTTSPTNNNNTNDNDNNSDNNNNKNNNNNNS). Positions 70-81 (QVTEEQQVTLED) are enriched in polar residues. The segment covering 97–113 (DSAEEDEDEMEDDDEDA) has biased composition (acidic residues). Over residues 134-153 (KVQQSTNTHLSQTTPESPTI) the composition is skewed to polar residues. Over residues 165-176 (STSTNNTPNTQS) the composition is skewed to low complexity. Positions 186 to 195 (LTSDEEKDLM) are enriched in basic and acidic residues. Positions 196-210 (LSEESDGGVGEDDDS) are enriched in acidic residues. The segment covering 222 to 286 (NQSNQNQNNN…SNNDNNNNNN (65 aa)) has biased composition (low complexity). The span at 315-325 (TQGSSTTTSDP) shows a compositional bias: polar residues. Residues 326–351 (NNQNNQINQINQNNQNNQNNQNNQNN) are compositionally biased toward low complexity. The segment covering 354–369 (GEEEFGEEFEEEEEDM) has biased composition (acidic residues). Over residues 372-382 (PKKKTKYKTSK) the composition is skewed to basic residues. 2 stretches are compositionally biased toward low complexity: residues 540–549 (QFLQQQQQQQ) and 561–580 (NSNN…NNNS). Positions 608-620 (YETRKYTKKRNDE) are enriched in basic and acidic residues. Residues Asp1165 and Gly1227 each contribute to the substrate site. Positions 1256, 1258, and 1350 each coordinate a divalent metal cation. The tract at residues 1485–1704 (QLERQKQLQQ…TPQNINNSDN (220 aa)) is disordered. A compositionally biased stretch (low complexity) spans 1491 to 1616 (QLQQQQQQAQ…NNSNNNNNMN (126 aa)). Residues 1649-1669 (LSPNSVNRGNNPSNISMSGAQ) are compositionally biased toward polar residues. Low complexity predominate over residues 1677 to 1698 (SPKPSNSPNSPSTSNNNGTPQN).

It belongs to the histone deacetylase family. HD type 2 subfamily.

The protein resides in the nucleus. It localises to the cytoplasm. The enzyme catalyses N(6)-acetyl-L-lysyl-[histone] + H2O = L-lysyl-[histone] + acetate. Responsible for the deacetylation of lysine residues on the N-terminal part of the core histones (H2A, H2B, H3 and H4). Histone deacetylation plays an important role in transcriptional regulation, cell cycle progression and developmental events. Histone deacetylases act via the formation of large multiprotein complexes. This chain is Type-2 histone deacetylase 2 (hdaC), found in Dictyostelium discoideum (Social amoeba).